The following is a 148-amino-acid chain: Lysozyme C-2 (148 aa).

Residues 1-18 (MKTLLTLGLLLLSVTAQA) form the signal peptide. One can recognise a C-type lysozyme domain in the interval 19 to 148 (KVYERCEFAR…LSQYIRNCGV (130 aa)). Intrachain disulfides connect Cys-24/Cys-146, Cys-48/Cys-134, Cys-83/Cys-99, and Cys-95/Cys-113. Catalysis depends on residues Glu-53 and Asp-71.

Belongs to the glycosyl hydrolase 22 family. Monomer. Expressed weakly in myeloblasts, moderately in immature macrophages, and strongly in both mature macrophages and macrophage-rich tissues.

The protein resides in the secreted. It carries out the reaction Hydrolysis of (1-&gt;4)-beta-linkages between N-acetylmuramic acid and N-acetyl-D-glucosamine residues in a peptidoglycan and between N-acetyl-D-glucosamine residues in chitodextrins.. Its function is as follows. Lysozymes have primarily a bacteriolytic function; those in tissues and body fluids are associated with the monocyte-macrophage system and enhance the activity of immunoagents. Lyz2 is active against a range of Gram-positive and Gram-negative bacteria. More effective than Lyz1 in killing Gram-negative bacteria. Lyz1 and Lyz2 are equally effective in killing Gram-positive bacteria. The chain is Lysozyme C-2 (Lyz2) from Mus musculus (Mouse).